The sequence spans 283 residues: Probable voltage-dependent anion-selective channel (283 aa).

Belongs to the eukaryotic mitochondrial porin family.

The protein resides in the mitochondrion outer membrane. Forms a channel through the cell membrane that allows diffusion of small hydrophilic molecules. Plays a role in maintaining mitochondrial morphology. The polypeptide is Probable voltage-dependent anion-selective channel (Caenorhabditis elegans).